A 1442-amino-acid chain; its full sequence is Clustered mitochondria protein homolog (1442 aa).

Disordered regions lie at residues 38–100 and 237–258; these read NYRN…KKPD and GRSE…KDRP. Over residues 82–100 the composition is skewed to basic and acidic residues; that stretch reads SEGEQQKDKTAAEDKKKPD. The 243-residue stretch at 394 to 636 folds into the Clu domain; that stretch reads RAEDTFSSKL…RTFPPDVNFL (243 aa). 2 stretches are compositionally biased toward basic and acidic residues: residues 696-714 and 737-763; these read QKQE…EPKA and ESKE…KVET. Disordered regions lie at residues 696 to 763 and 949 to 984; these read QKQE…KVET and SESD…SFQC. Positions 949–958 are enriched in polar residues; sequence SESDALTKSG. TPR repeat units lie at residues 1087–1120, 1213–1246, and 1248–1281; these read AYNF…LNNV, ALLD…NIKY, and GEKS…EKET. The interval 1373–1442 is disordered; the sequence is RQKEGGTSEQ…SSNASAQQVS (70 aa). Positions 1380 to 1390 are enriched in low complexity; it reads SEQAAAAQASQ. The span at 1424–1442 shows a compositional bias: polar residues; it reads ASSSKQADNSSNASAQQVS.

This sequence belongs to the CLU family.

It localises to the cytoplasm. In terms of biological role, mRNA-binding protein involved in proper cytoplasmic distribution of mitochondria. This chain is Clustered mitochondria protein homolog, found in Aedes aegypti (Yellowfever mosquito).